The primary structure comprises 104 residues: Glutaredoxin 1 (104 aa).

One can recognise a Glutaredoxin domain in the interval 1–96; sequence MNKSILHTII…KLLETQPKNK (96 aa). An intrachain disulfide couples C17 to C20.

This sequence belongs to the glutaredoxin family. As to quaternary structure, monomer.

Its subcellular location is the cytoplasm. Its function is as follows. Has a glutathione-disulfide oxidoreductase activity in the presence of NADPH and glutathione reductase. Reduces low molecular weight disulfides and proteins. The polypeptide is Glutaredoxin 1 (grxC1) (Rickettsia typhi (strain ATCC VR-144 / Wilmington)).